Reading from the N-terminus, the 352-residue chain is tRNA N6-adenosine threonylcarbamoyltransferase (352 aa).

Positions 111 and 115 each coordinate Fe cation. Residues leucine 133–glycine 137, aspartate 166, glycine 179, and asparagine 275 each bind substrate. A Fe cation-binding site is contributed by aspartate 300.

It belongs to the KAE1 / TsaD family. Requires Fe(2+) as cofactor.

The protein resides in the cytoplasm. It catalyses the reaction L-threonylcarbamoyladenylate + adenosine(37) in tRNA = N(6)-L-threonylcarbamoyladenosine(37) in tRNA + AMP + H(+). Its function is as follows. Required for the formation of a threonylcarbamoyl group on adenosine at position 37 (t(6)A37) in tRNAs that read codons beginning with adenine. Is involved in the transfer of the threonylcarbamoyl moiety of threonylcarbamoyl-AMP (TC-AMP) to the N6 group of A37, together with TsaE and TsaB. TsaD likely plays a direct catalytic role in this reaction. The polypeptide is tRNA N6-adenosine threonylcarbamoyltransferase (Treponema pallidum (strain Nichols)).